A 333-amino-acid chain; its full sequence is Phosphoribosylformylglycinamidine cyclo-ligase (333 aa).

The protein belongs to the AIR synthase family.

The protein resides in the cytoplasm. It catalyses the reaction 2-formamido-N(1)-(5-O-phospho-beta-D-ribosyl)acetamidine + ATP = 5-amino-1-(5-phospho-beta-D-ribosyl)imidazole + ADP + phosphate + H(+). It participates in purine metabolism; IMP biosynthesis via de novo pathway; 5-amino-1-(5-phospho-D-ribosyl)imidazole from N(2)-formyl-N(1)-(5-phospho-D-ribosyl)glycinamide: step 2/2. The chain is Phosphoribosylformylglycinamidine cyclo-ligase from Methanosarcina acetivorans (strain ATCC 35395 / DSM 2834 / JCM 12185 / C2A).